The following is a 427-amino-acid chain: Serine--tRNA ligase (427 aa).

Residue 231-233 coordinates L-serine; it reads TAE. 262–264 is an ATP binding site; sequence RSE. Glutamate 285 contributes to the L-serine binding site. Residue 349-352 participates in ATP binding; that stretch reads EISS. L-serine is bound at residue serine 385.

Belongs to the class-II aminoacyl-tRNA synthetase family. Type-1 seryl-tRNA synthetase subfamily. As to quaternary structure, homodimer. The tRNA molecule binds across the dimer.

The protein localises to the cytoplasm. It catalyses the reaction tRNA(Ser) + L-serine + ATP = L-seryl-tRNA(Ser) + AMP + diphosphate + H(+). The catalysed reaction is tRNA(Sec) + L-serine + ATP = L-seryl-tRNA(Sec) + AMP + diphosphate + H(+). The protein operates within aminoacyl-tRNA biosynthesis; selenocysteinyl-tRNA(Sec) biosynthesis; L-seryl-tRNA(Sec) from L-serine and tRNA(Sec): step 1/1. Functionally, catalyzes the attachment of serine to tRNA(Ser). Is also able to aminoacylate tRNA(Sec) with serine, to form the misacylated tRNA L-seryl-tRNA(Sec), which will be further converted into selenocysteinyl-tRNA(Sec). The chain is Serine--tRNA ligase from Sinorhizobium medicae (strain WSM419) (Ensifer medicae).